The chain runs to 455 residues: Tubulin alpha chain (455 aa).

GTP contacts are provided by Gln11, Glu77, Ser145, Gly149, Thr150, Ser184, Asn211, and Asn233. Glu77 is a Mg(2+) binding site. Glu259 is an active-site residue.

This sequence belongs to the tubulin family. As to quaternary structure, dimer of alpha and beta chains. A typical microtubule is a hollow water-filled tube with an outer diameter of 25 nm and an inner diameter of 15 nM. Alpha-beta heterodimers associate head-to-tail to form protofilaments running lengthwise along the microtubule wall with the beta-tubulin subunit facing the microtubule plus end conferring a structural polarity. Microtubules usually have 13 protofilaments but different protofilament numbers can be found in some organisms and specialized cells. Mg(2+) serves as cofactor.

Its subcellular location is the cytoplasm. The protein localises to the cytoskeleton. The catalysed reaction is GTP + H2O = GDP + phosphate + H(+). Tubulin is the major constituent of microtubules, a cylinder consisting of laterally associated linear protofilaments composed of alpha- and beta-tubulin heterodimers. Microtubules grow by the addition of GTP-tubulin dimers to the microtubule end, where a stabilizing cap forms. Below the cap, tubulin dimers are in GDP-bound state, owing to GTPase activity of alpha-tubulin. The protein is Tubulin alpha chain of Entamoeba histolytica (strain ATCC 30459 / HM-1:IMSS / ABRM).